We begin with the raw amino-acid sequence, 448 residues long: MQGTKNNIYTVSRLNGEVRQILEGQLGKIWLNGEISNFSSPSSGHWYLTLKDHSSQIRCAMFKGRNQTVSFKPINGQQVLVKGAISVYEPRGDYQLLIESMLPAGDGLLAQQFDALKMKLAAEGLFAADTKRPLPKNIQRIGVITSPTGAAIRDVLHVLARRDPSIEVIIYPTQVQGETAAQSICQAINIANQRLEVDVLLLTRGGGSLEDLWCFNSEALAHTIYNSALPVVSAVGHEVDTTISDYVADIRAPTPSAGAELLSQDSDNKAQKLATALSRLQQSAKHYQLKQERRLSLLEHRLQRQDPKRTLQQFEQRFDEMQLRLESALSNRLHILSRRQQLLASRLEQQSPKHKLAIEGNRLSYLASRLQDALQDKLSQSEQRIKYAAHQLETVSPLATLSRGYSITTDIHNQVVDSTDKLTIGDSLQTRLRHGQVISTVTQIKPLE.

This sequence belongs to the XseA family. In terms of assembly, heterooligomer composed of large and small subunits.

It localises to the cytoplasm. It carries out the reaction Exonucleolytic cleavage in either 5'- to 3'- or 3'- to 5'-direction to yield nucleoside 5'-phosphates.. Its function is as follows. Bidirectionally degrades single-stranded DNA into large acid-insoluble oligonucleotides, which are then degraded further into small acid-soluble oligonucleotides. This is Exodeoxyribonuclease 7 large subunit from Shewanella baltica (strain OS185).